Here is a 520-residue protein sequence, read N- to C-terminus: Pantetheine hydrolase VNN2 (520 aa).

The first 22 residues, 1 to 22 (MVTSSFPISVAVFALITLQVGT), serve as a signal peptide directing secretion. In terms of domain architecture, CN hydrolase spans 31–306 (YEHAVILPNK…GKLLLSEVDS (276 aa)). N-linked (GlcNAc...) asparagine glycosylation is present at Asn-39. Glu-80 serves as the catalytic Proton acceptor. Lys-179 (proton donor) is an active-site residue. Cys-211 functions as the Nucleophile in the catalytic mechanism. Residues Asn-273, Asn-347, Asn-357, Asn-411, and Asn-468 are each glycosylated (N-linked (GlcNAc...) asparagine). Cys-493 is lipidated: GPI-anchor amidated cysteine. The propeptide at 494–520 (GTSNSAITYLLIFILLMIIALQNIVML) is removed in mature form.

It belongs to the carbon-nitrogen hydrolase superfamily. BTD/VNN family. Widely expressed with higher expression in spleen and blood.

Its subcellular location is the cell membrane. The enzyme catalyses (R)-pantetheine + H2O = cysteamine + (R)-pantothenate. In terms of biological role, amidohydrolase that hydrolyzes specifically one of the carboamide linkages in D-pantetheine thus recycling pantothenic acid (vitamin B5) and releasing cysteamine. Involved in the thymus homing of bone marrow cells. May regulate beta-2 integrin-mediated cell adhesion, migration and motility of neutrophil. The polypeptide is Pantetheine hydrolase VNN2 (Homo sapiens (Human)).